The chain runs to 99 residues: Small ribosomal subunit protein bS20 (99 aa).

It belongs to the bacterial ribosomal protein bS20 family.

Binds directly to 16S ribosomal RNA. The protein is Small ribosomal subunit protein bS20 of Prochlorococcus marinus (strain SARG / CCMP1375 / SS120).